A 365-amino-acid chain; its full sequence is Phospho-N-acetylmuramoyl-pentapeptide-transferase (365 aa).

A run of 9 helical transmembrane segments spans residues 47–67 (LLAL…VVPL), 92–112 (PTMG…ILAG), 114–134 (SPLV…GWLD), 153–173 (LCLQ…QQGW), 180–200 (ITLP…LAVF), 215–235 (LDGL…LWLA), 239–259 (PAIA…LLHN), 281–301 (AIAI…LFVL), and 344–364 (TQVV…CWLL).

It belongs to the glycosyltransferase 4 family. MraY subfamily. The cofactor is Mg(2+).

It localises to the cell inner membrane. The enzyme catalyses UDP-N-acetyl-alpha-D-muramoyl-L-alanyl-gamma-D-glutamyl-meso-2,6-diaminopimeloyl-D-alanyl-D-alanine + di-trans,octa-cis-undecaprenyl phosphate = di-trans,octa-cis-undecaprenyl diphospho-N-acetyl-alpha-D-muramoyl-L-alanyl-D-glutamyl-meso-2,6-diaminopimeloyl-D-alanyl-D-alanine + UMP. Its pathway is cell wall biogenesis; peptidoglycan biosynthesis. Catalyzes the initial step of the lipid cycle reactions in the biosynthesis of the cell wall peptidoglycan: transfers peptidoglycan precursor phospho-MurNAc-pentapeptide from UDP-MurNAc-pentapeptide onto the lipid carrier undecaprenyl phosphate, yielding undecaprenyl-pyrophosphoryl-MurNAc-pentapeptide, known as lipid I. This is Phospho-N-acetylmuramoyl-pentapeptide-transferase from Synechococcus elongatus (strain ATCC 33912 / PCC 7942 / FACHB-805) (Anacystis nidulans R2).